The primary structure comprises 82 residues: Sec-independent protein translocase protein TatA (82 aa).

The chain crosses the membrane as a helical span at residues 1–21 (MHPPSITQLLIILLIIVLLFG). The interval 42-82 (AVKEDEEDNQSEENTKSQIKQSESKNENVSKTHTDSQKQDT) is disordered. The span at 63–82 (SESKNENVSKTHTDSQKQDT) shows a compositional bias: basic and acidic residues.

The protein belongs to the TatA/E family. The Tat system comprises two distinct complexes: a TatABC complex, containing multiple copies of TatA, TatB and TatC subunits, and a separate TatA complex, containing only TatA subunits. Substrates initially bind to the TatABC complex, which probably triggers association of the separate TatA complex to form the active translocon.

The protein resides in the cell inner membrane. Functionally, part of the twin-arginine translocation (Tat) system that transports large folded proteins containing a characteristic twin-arginine motif in their signal peptide across membranes. TatA could form the protein-conducting channel of the Tat system. This chain is Sec-independent protein translocase protein TatA, found in Helicobacter hepaticus (strain ATCC 51449 / 3B1).